The following is a 227-amino-acid chain: ATP-dependent dethiobiotin synthetase BioD (227 aa).

13-18 (DIGKTY) contributes to the ATP binding site. A Mg(2+)-binding site is contributed by threonine 17. Lysine 38 is an active-site residue. Serine 42 contributes to the substrate binding site. ATP-binding positions include aspartate 55, 116-119 (EGSG), and 179-180 (NN). Mg(2+) is bound by residues aspartate 55 and glutamate 116.

This sequence belongs to the dethiobiotin synthetase family. As to quaternary structure, homodimer. The cofactor is Mg(2+).

It is found in the cytoplasm. The enzyme catalyses (7R,8S)-7,8-diammoniononanoate + CO2 + ATP = (4R,5S)-dethiobiotin + ADP + phosphate + 3 H(+). It participates in cofactor biosynthesis; biotin biosynthesis; biotin from 7,8-diaminononanoate: step 1/2. In terms of biological role, catalyzes a mechanistically unusual reaction, the ATP-dependent insertion of CO2 between the N7 and N8 nitrogen atoms of 7,8-diaminopelargonic acid (DAPA, also called 7,8-diammoniononanoate) to form a ureido ring. This chain is ATP-dependent dethiobiotin synthetase BioD, found in Clostridium botulinum (strain Eklund 17B / Type B).